A 774-amino-acid chain; its full sequence is Ion-translocating oxidoreductase complex subunit C (774 aa).

2 consecutive 4Fe-4S ferredoxin-type domains span residues 369–397 (GEPQEEQSCIRCSACADACPADLLPQQLY) and 407–436 (KATTHNIADCIECGACAWVCPSNIPLVQYF). [4Fe-4S] cluster-binding residues include cysteine 377, cysteine 380, cysteine 383, cysteine 387, cysteine 416, cysteine 419, cysteine 422, and cysteine 426. The disordered stretch occupies residues 602–750 (KLEQQQANAE…EPEEQIDPRK (149 aa)).

Belongs to the 4Fe4S bacterial-type ferredoxin family. RnfC subfamily. In terms of assembly, the complex is composed of six subunits: RsxA, RsxB, RsxC, RsxD, RsxE and RsxG. The cofactor is [4Fe-4S] cluster.

It localises to the cell inner membrane. Its function is as follows. Part of a membrane-bound complex that couples electron transfer with translocation of ions across the membrane. Required to maintain the reduced state of SoxR. In Escherichia coli O6:K15:H31 (strain 536 / UPEC), this protein is Ion-translocating oxidoreductase complex subunit C.